The primary structure comprises 468 residues: 6-phospho-beta-galactosidase (468 aa).

The D-galactose 6-phosphate site is built by Gln-19, His-116, Asn-159, Glu-160, and Asn-297. Glu-160 acts as the Proton donor in catalysis. Glu-375 functions as the Nucleophile in the catalytic mechanism. Residues Ser-428, Trp-429, Lys-435, and Tyr-437 each contribute to the D-galactose 6-phosphate site.

It belongs to the glycosyl hydrolase 1 family.

It catalyses the reaction a 6-phospho-beta-D-galactoside + H2O = D-galactose 6-phosphate + an alcohol. The protein operates within carbohydrate metabolism; lactose degradation; D-galactose 6-phosphate and beta-D-glucose from lactose 6-phosphate: step 1/1. The sequence is that of 6-phospho-beta-galactosidase from Lactococcus lactis subsp. lactis (Streptococcus lactis).